We begin with the raw amino-acid sequence, 312 residues long: Olfactory receptor 1D5 (312 aa).

At 1–25 the chain is on the extracellular side; the sequence is MDGDNQSENSQFLLLGISESPEQQQ. The N-linked (GlcNAc...) asparagine glycan is linked to Asn5. The chain crosses the membrane as a helical span at residues 26 to 49; it reads ILFWMFLSMYLVTVLGNVLIILAI. Over 50-57 the chain is Cytoplasmic; sequence SSDSRLHT. Residues 58–79 form a helical membrane-spanning segment; that stretch reads PMYFFLANLSFTDLFFVTNTIP. At 80 to 100 the chain is on the extracellular side; that stretch reads KMLVNLQSQNKAISYAGCLTQ. Cys97 and Cys189 are disulfide-bonded. The helical transmembrane segment at 101–120 threads the bilayer; that stretch reads LYFLVSLVTLDNLILAVMAY. Residues 121-140 lie on the Cytoplasmic side of the membrane; it reads DRYVAICCPLHYVTAMSPGL. A helical transmembrane segment spans residues 141 to 158; the sequence is CVLLLSLCWGLSVFYGLL. The Extracellular segment spans residues 159 to 196; sequence LTLLLTRVTFCGPREIHYLFCDMYILLRLACSNTHIIH. Residues 197–220 traverse the membrane as a helical segment; it reads TVLVATGCFIFLTPLGFMTTSYVR. Topologically, residues 221-237 are cytoplasmic; sequence IVRTILQIPSASKKYKA. Residues 238–260 form a helical membrane-spanning segment; that stretch reads FSTCASHLGVVSLFYGTLAMVYL. At 261–271 the chain is on the extracellular side; that stretch reads QPLHTYSMKDS. Residues 272 to 291 traverse the membrane as a helical segment; the sequence is VATVMYAVVTPMMNPFIHSL. Residues 292-312 are Cytoplasmic-facing; sequence RNKDMHGALGRVLRRLFQRPK.

The protein belongs to the G-protein coupled receptor 1 family.

It localises to the cell membrane. In terms of biological role, odorant receptor. The protein is Olfactory receptor 1D5 (OR1D5) of Pan troglodytes (Chimpanzee).